The sequence spans 496 residues: Glycerol kinase (496 aa).

T12 provides a ligand contact to ADP. 3 residues coordinate ATP: T12, T13, and S14. A sn-glycerol 3-phosphate-binding site is contributed by T12. R16 lines the ADP pocket. Sn-glycerol 3-phosphate contacts are provided by R82, E83, and Y134. Residues R82, E83, and Y134 each contribute to the glycerol site. H230 bears the Phosphohistidine; by HPr mark. D244 is a sn-glycerol 3-phosphate binding site. Glycerol contacts are provided by D244 and Q245. Residues T266 and G309 each coordinate ADP. ATP-binding residues include T266, G309, Q313, and G410. 2 residues coordinate ADP: G410 and N414.

It belongs to the FGGY kinase family. In terms of assembly, homotetramer and homodimer (in equilibrium). Post-translationally, the phosphoenolpyruvate-dependent sugar phosphotransferase system (PTS), including enzyme I, and histidine-containing protein (HPr) are required for the phosphorylation, which leads to the activation of the enzyme.

It carries out the reaction glycerol + ATP = sn-glycerol 3-phosphate + ADP + H(+). Its pathway is polyol metabolism; glycerol degradation via glycerol kinase pathway; sn-glycerol 3-phosphate from glycerol: step 1/1. Its activity is regulated as follows. Activated by phosphorylation and inhibited by fructose 1,6-bisphosphate (FBP). Its function is as follows. Key enzyme in the regulation of glycerol uptake and metabolism. Catalyzes the phosphorylation of glycerol to yield sn-glycerol 3-phosphate. The protein is Glycerol kinase of Bacillus cereus (strain G9842).